The following is a 138-amino-acid chain: Ribulose bisphosphate carboxylase small subunit (138 aa).

It belongs to the RuBisCO small chain family. In terms of assembly, heterohexadecamer of 8 large and 8 small subunits.

It localises to the plastid. The protein localises to the chloroplast. RuBisCO catalyzes two reactions: the carboxylation of D-ribulose 1,5-bisphosphate, the primary event in carbon dioxide fixation, as well as the oxidative fragmentation of the pentose substrate in the photorespiration process. Both reactions occur simultaneously and in competition at the same active site. Although the small subunit is not catalytic it is essential for maximal activity. In Pyropia suborbiculata (Red alga), this protein is Ribulose bisphosphate carboxylase small subunit.